We begin with the raw amino-acid sequence, 621 residues long: Ubiquitin-like-specific protease 1 (621 aa).

N-acetylserine is present on Ser2. 2 positions are modified to phosphoserine: Ser21 and Ser25. 2 disordered regions span residues 116–150 and 169–196; these read FDGS…ENYS and RRRI…SNCD. Residues 124–141 show a composition bias toward low complexity; sequence SGNSDVESRSSGSRSSDV. At Thr179 the chain carries Phosphothreonine. Residues 179 to 196 show a composition bias toward polar residues; it reads TPSTSPISSLASQKSNCD. Residue Ser264 is modified to Phosphoserine. Residues 432 to 621 form a protease region; sequence NIEITVRDFK…AHLILTDALK (190 aa). Active-site residues include His514, Asp531, and Cys580.

Belongs to the peptidase C48 family.

The enzyme catalyses Hydrolysis of the alpha-linked peptide bond in the sequence Gly-Gly-|-Ala-Thr-Tyr at the C-terminal end of the small ubiquitin-like modifier (SUMO) propeptide, Smt3, leading to the mature form of the protein. A second reaction involves the cleavage of an epsilon-linked peptide bond between the C-terminal glycine of the mature SUMO and the lysine epsilon-amino group of the target protein.. In terms of biological role, protease that catalyzes two essential functions in the SUMO pathway: processing of full-length SMT3 to its mature form and deconjugation of SMT3 from targeted proteins. Has an essential role in the G2/M phase of the cell cycle. The chain is Ubiquitin-like-specific protease 1 (ULP1) from Saccharomyces cerevisiae (strain ATCC 204508 / S288c) (Baker's yeast).